The chain runs to 215 residues: Phosphatidylserine decarboxylase proenzyme (215 aa).

Residue S185 is the Schiff-base intermediate with substrate; via pyruvic acid of the active site. A Pyruvic acid (Ser); by autocatalysis modification is found at S185.

Belongs to the phosphatidylserine decarboxylase family. PSD-A subfamily. Heterodimer of a large membrane-associated beta subunit and a small pyruvoyl-containing alpha subunit. Pyruvate is required as a cofactor. Post-translationally, is synthesized initially as an inactive proenzyme. Formation of the active enzyme involves a self-maturation process in which the active site pyruvoyl group is generated from an internal serine residue via an autocatalytic post-translational modification. Two non-identical subunits are generated from the proenzyme in this reaction, and the pyruvate is formed at the N-terminus of the alpha chain, which is derived from the carboxyl end of the proenzyme. The post-translation cleavage follows an unusual pathway, termed non-hydrolytic serinolysis, in which the side chain hydroxyl group of the serine supplies its oxygen atom to form the C-terminus of the beta chain, while the remainder of the serine residue undergoes an oxidative deamination to produce ammonia and the pyruvoyl prosthetic group on the alpha chain.

Its subcellular location is the cell membrane. It carries out the reaction a 1,2-diacyl-sn-glycero-3-phospho-L-serine + H(+) = a 1,2-diacyl-sn-glycero-3-phosphoethanolamine + CO2. It participates in phospholipid metabolism; phosphatidylethanolamine biosynthesis; phosphatidylethanolamine from CDP-diacylglycerol: step 2/2. Catalyzes the formation of phosphatidylethanolamine (PtdEtn) from phosphatidylserine (PtdSer). In Streptomyces griseus subsp. griseus (strain JCM 4626 / CBS 651.72 / NBRC 13350 / KCC S-0626 / ISP 5235), this protein is Phosphatidylserine decarboxylase proenzyme.